A 621-amino-acid chain; its full sequence is Altered inheritance of mitochondria protein 9, mitochondrial (621 aa).

A mitochondrion-targeting transit peptide spans 1–40 (MIRSTTAKLGKRCATLRVRASPILRPLVATRCITNKADEV).

It belongs to the AIM9 family.

It is found in the mitochondrion. The protein is Altered inheritance of mitochondria protein 9, mitochondrial (AIM9) of Zygosaccharomyces rouxii (strain ATCC 2623 / CBS 732 / NBRC 1130 / NCYC 568 / NRRL Y-229).